The following is a 430-amino-acid chain: Tektin-2 (430 aa).

2 coiled-coil regions span residues Lys80–Leu162 and Asn225–Asn382.

It belongs to the tektin family. Microtubule inner protein component of sperm flagellar doublet microtubules. May interact with CCDC172. In terms of processing, tyrosine phosphorylated. Post-translationally, ubiquitinated, leading to its degradation. Deubiquitinated by USP16, promoting its stability. As to expression, expressed at high levels in testis, trachea and fetal lung, and at lower levels in ovary, pituitary, adult lung, fetal brain and fetal kidney.

It localises to the cytoplasm. It is found in the cytoskeleton. The protein resides in the cilium axoneme. The protein localises to the flagellum axoneme. Its subcellular location is the microtubule organizing center. Functionally, microtubule inner protein (MIP) part of the dynein-decorated doublet microtubules (DMTs) in cilia and flagellar axoneme. Plays a key role in the assembly or attachment of the inner dynein arm to microtubules in sperm flagella and tracheal cilia. Forms filamentous polymers in the walls of ciliary and flagellar microtubules. The protein is Tektin-2 of Homo sapiens (Human).